The following is a 230-amino-acid chain: Ribonuclease 3 (230 aa).

One can recognise an RNase III domain in the interval Tyr5 to Asp125. Glu40 contributes to the Mg(2+) binding site. Asp44 is a catalytic residue. Residues Asp111 and Glu114 each coordinate Mg(2+). The active site involves Glu114. Residues Asp153–Gln223 enclose the DRBM domain.

This sequence belongs to the ribonuclease III family. In terms of assembly, homodimer. Mg(2+) is required as a cofactor.

The protein resides in the cytoplasm. It carries out the reaction Endonucleolytic cleavage to 5'-phosphomonoester.. Functionally, digests double-stranded RNA. Involved in the processing of primary rRNA transcript to yield the immediate precursors to the large and small rRNAs (23S and 16S). Processes some mRNAs, and tRNAs when they are encoded in the rRNA operon. Processes pre-crRNA and tracrRNA of type II CRISPR loci if present in the organism. This Francisella tularensis subsp. holarctica (strain LVS) protein is Ribonuclease 3.